Here is a 388-residue protein sequence, read N- to C-terminus: S-adenosylmethionine synthase (388 aa).

Residue His-17 participates in ATP binding. Asp-19 contacts Mg(2+). Glu-45 is a K(+) binding site. L-methionine-binding residues include Glu-58 and Gln-106. A flexible loop region spans residues 106–116 (QSAHIAQGVDK). Residues 166-168 (DAK), Asp-241, 247-248 (RK), Ala-264, and Lys-268 each bind ATP. Asp-241 contacts L-methionine. L-methionine is bound at residue Lys-272.

It belongs to the AdoMet synthase family. Homotetramer; dimer of dimers. Mg(2+) is required as a cofactor. Requires K(+) as cofactor.

It localises to the cytoplasm. The catalysed reaction is L-methionine + ATP + H2O = S-adenosyl-L-methionine + phosphate + diphosphate. The protein operates within amino-acid biosynthesis; S-adenosyl-L-methionine biosynthesis; S-adenosyl-L-methionine from L-methionine: step 1/1. Its function is as follows. Catalyzes the formation of S-adenosylmethionine (AdoMet) from methionine and ATP. The overall synthetic reaction is composed of two sequential steps, AdoMet formation and the subsequent tripolyphosphate hydrolysis which occurs prior to release of AdoMet from the enzyme. In Cereibacter sphaeroides (strain ATCC 17023 / DSM 158 / JCM 6121 / CCUG 31486 / LMG 2827 / NBRC 12203 / NCIMB 8253 / ATH 2.4.1.) (Rhodobacter sphaeroides), this protein is S-adenosylmethionine synthase.